The primary structure comprises 646 residues: Wee1-like protein kinase (646 aa).

The segment at 1 to 181 is disordered; sequence MSFLSRQQPP…GTPPHKTFRK (181 aa). Residues 32–43 show a composition bias toward acidic residues; that stretch reads DCEEEEEEEEEE. Serine 53 is subject to Phosphoserine; by PLK1. A phosphoserine mark is found at serine 78 and serine 85. A compositionally biased stretch (low complexity) spans 94–103; the sequence is LLPGACPGAD. Residue serine 123 is modified to Phosphoserine; by CDK1. A phosphoserine mark is found at serine 127, serine 137, serine 139, serine 150, and serine 165. The span at 158-170 shows a compositional bias: basic and acidic residues; it reads RAGEGRRSPRPDH. Threonine 187, threonine 190, and threonine 239 each carry phosphothreonine. A phosphoserine mark is found at serine 270, serine 307, and serine 312. The 271-residue stretch at 299–569 folds into the Protein kinase domain; the sequence is FHELEKIGSG…AMALVKHSVL (271 aa). ATP contacts are provided by residues 305–313 and lysine 328; that span reads IGSGEFGSV. Asparagine 342 serves as a coordination point for Mg(2+). Aspartate 426 (proton acceptor) is an active-site residue. Mg(2+) is bound by residues asparagine 431, aspartate 463, and glycine 465. Serine 642 bears the Phosphoserine; by BRSK1 and BRSK2 mark.

It belongs to the protein kinase superfamily. Ser/Thr protein kinase family. WEE1 subfamily. Mg(2+) serves as cofactor. In terms of processing, phosphorylated during M and G1 phases. Also autophosphorylated. Phosphorylation at Ser-642 by BRSK1 and BRSK2 in post-mitotic neurons, leads to down-regulate WEE1 activity in polarized neurons. Phosphorylated at Ser-53 and Ser-123 by PLK1 and CDK1, respectively, generating an signal for degradation that can be recognized by the SCF(BTRC) complex, leading to its ubiquitination and degradation at the onset of G2/M phase. Post-translationally, dephosphorylated at Thr-239 by CTDP1. Dephosphorylated at Ser-53 and Ser-123 by the serine/threonine-protein phosphatase 2A preventing its ubiquitin-mediated degradation. Ubiquitinated and degraded at the onset of G2/M phase.

The protein resides in the nucleus. It carries out the reaction L-tyrosyl-[protein] + ATP = O-phospho-L-tyrosyl-[protein] + ADP + H(+). With respect to regulation, synthesis is increased during S and G2 phases, presumably by an increase in transcription; activity is decreased by phosphorylation during M phase. Protein levels fall in M phase as a result of decreased synthesis combined with degradation. Activity seems to be negatively regulated by phosphorylation upon entry into mitosis, although N-terminal phosphorylation might also regulate the protein stability via protection from proteolysis or might regulate the subcellular location. Functionally, acts as a negative regulator of entry into mitosis (G2 to M transition) by protecting the nucleus from cytoplasmically activated cyclin B1-complexed CDK1 before the onset of mitosis by mediating phosphorylation of CDK1 on 'Tyr-15'. Specifically phosphorylates and inactivates cyclin B1-complexed CDK1 reaching a maximum during G2 phase and a minimum as cells enter M phase. Phosphorylation of cyclin B1-CDK1 occurs exclusively on 'Tyr-15' and phosphorylation of monomeric CDK1 does not occur. Its activity increases during S and G2 phases and decreases at M phase when it is hyperphosphorylated. A correlated decrease in protein level occurs at M/G1 phase, probably due to its degradation. The sequence is that of Wee1-like protein kinase from Homo sapiens (Human).